The sequence spans 393 residues: Phospholipase A1-II 1 (393 aa).

Residues Gln200–Thr220 adopt a coiled-coil conformation. Ser225 serves as the catalytic Acyl-ester intermediate. Catalysis depends on charge relay system residues Ser225, Asp284, and His321.

Belongs to the AB hydrolase superfamily. Lipase family.

The protein localises to the cytoplasm. Its function is as follows. Acylhydrolase that catalyzes the hydrolysis of phospholipids at the sn-1 position. This is Phospholipase A1-II 1 from Oryza sativa subsp. indica (Rice).